The chain runs to 185 residues: Ribosome-recycling factor (185 aa).

The segment at 137–158 is disordered; that stretch reads DELKKLEKDHTASEDEVKRAQD.

It belongs to the RRF family.

It localises to the cytoplasm. Its function is as follows. Responsible for the release of ribosomes from messenger RNA at the termination of protein biosynthesis. May increase the efficiency of translation by recycling ribosomes from one round of translation to another. This chain is Ribosome-recycling factor, found in Desulfitobacterium hafniense (strain Y51).